The primary structure comprises 136 residues: Mediator of RNA polymerase II transcription subunit 31 (136 aa).

A compositionally biased stretch (low complexity) spans 117–128 (AEQQQQQQPQAP). The interval 117–136 (AEQQQQQQPQAPSHANTTSK) is disordered.

Belongs to the Mediator complex subunit 31 family. In terms of assembly, component of the Mediator complex.

It localises to the nucleus. In terms of biological role, component of the Mediator complex, a coactivator involved in the regulated transcription of nearly all RNA polymerase II-dependent genes. Mediator functions as a bridge to convey information from gene-specific regulatory proteins to the basal RNA polymerase II transcription machinery. Mediator is recruited to promoters by direct interactions with regulatory proteins and serves as a scaffold for the assembly of a functional preinitiation complex with RNA polymerase II and the general transcription factors. The chain is Mediator of RNA polymerase II transcription subunit 31 (med31) from Danio rerio (Zebrafish).